We begin with the raw amino-acid sequence, 272 residues long: Imidazole glycerol phosphate synthase subunit HisF (272 aa).

Active-site residues include D11 and D130.

This sequence belongs to the HisA/HisF family. In terms of assembly, heterodimer of HisH and HisF.

The protein localises to the cytoplasm. It catalyses the reaction 5-[(5-phospho-1-deoxy-D-ribulos-1-ylimino)methylamino]-1-(5-phospho-beta-D-ribosyl)imidazole-4-carboxamide + L-glutamine = D-erythro-1-(imidazol-4-yl)glycerol 3-phosphate + 5-amino-1-(5-phospho-beta-D-ribosyl)imidazole-4-carboxamide + L-glutamate + H(+). It functions in the pathway amino-acid biosynthesis; L-histidine biosynthesis; L-histidine from 5-phospho-alpha-D-ribose 1-diphosphate: step 5/9. Functionally, IGPS catalyzes the conversion of PRFAR and glutamine to IGP, AICAR and glutamate. The HisF subunit catalyzes the cyclization activity that produces IGP and AICAR from PRFAR using the ammonia provided by the HisH subunit. The polypeptide is Imidazole glycerol phosphate synthase subunit HisF (Methanococcus maripaludis (strain C5 / ATCC BAA-1333)).